The sequence spans 191 residues: Molybdenum cofactor guanylyltransferase (191 aa).

GTP-binding positions include 11–13 (LCG), K23, D66, and D97. Residue D97 participates in Mg(2+) binding.

The protein belongs to the MobA family. Monomer. It depends on Mg(2+) as a cofactor.

The protein resides in the cytoplasm. The enzyme catalyses Mo-molybdopterin + GTP + H(+) = Mo-molybdopterin guanine dinucleotide + diphosphate. Functionally, transfers a GMP moiety from GTP to Mo-molybdopterin (Mo-MPT) cofactor (Moco or molybdenum cofactor) to form Mo-molybdopterin guanine dinucleotide (Mo-MGD) cofactor. This Campylobacter jejuni subsp. doylei (strain ATCC BAA-1458 / RM4099 / 269.97) protein is Molybdenum cofactor guanylyltransferase.